The chain runs to 1096 residues: cAMP/cGMP-dependent 3',5'-cAMP/cGMP phosphodiesterase B (1096 aa).

The disordered stretch occupies residues 216-248; it reads SSSKMIINDSPRTQQRNGTTEQQKKQQQQQYLQ. Residues 225–236 show a composition bias toward polar residues; sequence SPRTQQRNGTTE. Residues His573, His575, and Asp577 each coordinate a divalent metal cation. Residues 783–930 and 946–1070 contribute to the a nucleoside 3',5'-cyclic phosphate site; these read VFSK…DLSH and ITQH…EDNI.

The protein belongs to the metallo-beta-lactamase superfamily. cNMP phosphodiesterase family. The cofactor is Mn(2+). Requires Mg(2+) as cofactor. It depends on Zn(2+) as a cofactor.

It localises to the cytoplasm. The protein resides in the cytosol. The catalysed reaction is 3',5'-cyclic AMP + H2O = AMP + H(+). The enzyme catalyses 3',5'-cyclic GMP + H2O = GMP + H(+). Functionally, dual specificity cAMP and cGMP phosphodiesterase with marked preference for cyclic AMP, which is activated by cAMP and cGMP. Likely functions as a cAMP-stimulated cAMP-phosphodiesterase which may play a role in regulating the cAMP relay response. This chain is cAMP/cGMP-dependent 3',5'-cAMP/cGMP phosphodiesterase B (pdeE), found in Dictyostelium discoideum (Social amoeba).